Consider the following 344-residue polypeptide: Aspartate carbamoyltransferase catalytic subunit (344 aa).

The segment at 1 to 30 is disordered; sequence MPESPPLPKRSPLMTSSTTRPASDYPPGGD. The carbamoyl phosphate site is built by R88 and T89. K116 is a binding site for L-aspartate. Carbamoyl phosphate is bound by residues R138, H166, and Q169. L-aspartate-binding residues include R199 and R253. Carbamoyl phosphate-binding residues include G294 and P295.

Belongs to the aspartate/ornithine carbamoyltransferase superfamily. ATCase family. As to quaternary structure, heterododecamer (2C3:3R2) of six catalytic PyrB chains organized as two trimers (C3), and six regulatory PyrI chains organized as three dimers (R2).

It carries out the reaction carbamoyl phosphate + L-aspartate = N-carbamoyl-L-aspartate + phosphate + H(+). It participates in pyrimidine metabolism; UMP biosynthesis via de novo pathway; (S)-dihydroorotate from bicarbonate: step 2/3. Catalyzes the condensation of carbamoyl phosphate and aspartate to form carbamoyl aspartate and inorganic phosphate, the committed step in the de novo pyrimidine nucleotide biosynthesis pathway. In Sphingopyxis alaskensis (strain DSM 13593 / LMG 18877 / RB2256) (Sphingomonas alaskensis), this protein is Aspartate carbamoyltransferase catalytic subunit.